The sequence spans 1008 residues: Phytosulfokine receptor 1 (1008 aa).

The first 25 residues, 1–25 (MRVHRFCVIVIFLTELLCFFYSSES), serve as a signal peptide directing secretion. Residues Asn-55, Asn-64, and Asn-73 are each glycosylated (N-linked (GlcNAc...) asparagine). LRR repeat units lie at residues 75-98 (TGRVIRLELGNKKLSGKLSESLGK), 99-123 (LDEIRVLNLSRNFIKDSIPLSIFNL), 124-148 (KNLQTLDLSSNDLSGGIPTSINLPA), 150-170 (QSFDLSSNKFNGSLPSHICHN), 172-194 (TQIRVVKLAVNYFAGNFTSGFGK), 195-219 (CVLLEHLCLGMNDLTGNIPEDLFHL), 221-243 (RLNLLGIQENRLSGSLSREIRNL), 244-266 (SSLVRLDVSWNLFSGEIPDVFDE), 291-315 (SPSLNLLNLRNNSLSGRLMLNCTAM), 316-339 (IALNSLDLGTNRFNGRLPENLPDC), 341-362 (RLKNVNLARNTFHGQVPESFKN), and 363-387 (FESLSYFSLSNSSLANISSALGILQ). N-linked (GlcNAc...) asparagine glycosylation is present at Asn-106. N-linked (GlcNAc...) asparagine glycans are attached at residues Asn-160, Asn-170, and Asn-187. A glycan (N-linked (GlcNAc...) asparagine) is linked at Asn-242. Position 300 (Arg-300) interacts with phytosulfokine. Residues Asn-301 and Asn-311 are each glycosylated (N-linked (GlcNAc...) asparagine). Asn-346, Ser-370, and Ser-372 together coordinate phytosulfokine. Residues Asn-373, Asn-378, and Asn-391 are each glycosylated (N-linked (GlcNAc...) asparagine). LRR repeat units lie at residues 392–414 (LTTLVLTLNFHGEALPDDSSLHF), 415–438 (EKLKVLVVANCRLTGSMPRWLSSS), 439–464 (NELQLLDLSWNRLTGAIPSWIGDFKA), and 466–486 (FYLDLSNNSFTGEIPKSLTKL). Residues Thr-398, Asn-424, and Asp-445 each contribute to the phytosulfokine site. Asn-472 and Asn-493 each carry an N-linked (GlcNAc...) asparagine glycan. Lys-508 provides a ligand contact to phytosulfokine. N-linked (GlcNAc...) asparagine glycans are attached at residues Asn-510 and Asn-534. LRR repeat units follow at residues 521–545 (IFGFPPTIELGHNNLSGPIWEEFGN), 546–570 (LKKLHVFDLKWNALSGSIPSSLSGM), 571–594 (TSLEALDLSNNRLSGSIPVSLQQL), and 596–619 (FLSKFSVAYNNLSGVIPSGGQFQT). N-linked (GlcNAc...) asparagine glycans are attached at residues Asn-606 and Asn-622. A helical membrane pass occupies residues 660 to 680 (MAIGIAFGSVFLLTLLSLIVL). The residue at position 731 (Thr-731) is a Phosphothreonine. The 272-residue stretch at 734–1005 (FDQANIIGCG…PTTQQLVSWL (272 aa)) folds into the Protein kinase domain. Residues 740-748 (IGCGGFGMV) and Lys-762 contribute to the ATP site. Phosphotyrosine is present on residues Tyr-807 and Tyr-847. The active-site Proton acceptor is Asp-860. Tyr-902 bears the Phosphotyrosine mark.

It belongs to the protein kinase superfamily. Ser/Thr protein kinase family. As to quaternary structure, homo- and heterodimers with PSY1R. Heterodimers with the somatic embryogenesis receptor-like kinases (SERKs). PSK is not directly involved in PSKR-SERK interaction but stabilizes PSKR island domain for recruitment of a SERK. Part of a functional complex containing PSKR1, BAK1, CNGC17, and AHA. Interacts with AHA1, AHA2, and BAK1, but not with CNGC17 or BRI1. Mg(2+) serves as cofactor. Requires Mn(2+) as cofactor. As to expression, weakly expressed in roots, leaves, stems and flowers. Expressed in the primary and lateral roots, including root primordia and root tips, but not in the hypocotyl.

The protein resides in the cell membrane. The catalysed reaction is L-seryl-[protein] + ATP = O-phospho-L-seryl-[protein] + ADP + H(+). The enzyme catalyses L-threonyl-[protein] + ATP = O-phospho-L-threonyl-[protein] + ADP + H(+). It catalyses the reaction GTP = 3',5'-cyclic GMP + diphosphate. Its activity is regulated as follows. cGMP suppresses kinase activity. Its function is as follows. Phytosulfokine receptor with both a serine/threonine-protein kinase activity and a guanylate cyclase activity. Regulates, in response to phytosulfokine binding, a signaling cascade involved in plant cell differentiation, organogenesis, somatic embryogenesis, cellular proliferation and plant growth. Involved in plant immunity, with antagonistic effects on bacterial and fungal resistances. Not involved in PSY perception. CNGC17 and AHAs form a functional cation-translocating unit that is activated by PSKR1/BAK1 and possibly other BAK1/RLK complexes. The chain is Phytosulfokine receptor 1 from Arabidopsis thaliana (Mouse-ear cress).